The following is a 248-amino-acid chain: ATP synthase subunit a, chloroplastic (248 aa).

5 consecutive transmembrane segments (helical) span residues 37–57, 96–116, 135–155, 200–220, and 221–241; these read AQVL…AFVT, VPFI…GALF, INTT…AGLH, LVVA…MMFL, and GLFT…AYIG.

It belongs to the ATPase A chain family. F-type ATPases have 2 components, CF(1) - the catalytic core - and CF(0) - the membrane proton channel. CF(1) has five subunits: alpha(3), beta(3), gamma(1), delta(1), epsilon(1). CF(0) has four main subunits: a, b, b' and c.

It is found in the plastid. The protein localises to the chloroplast thylakoid membrane. Key component of the proton channel; it plays a direct role in the translocation of protons across the membrane. This Psilotum nudum (Whisk fern) protein is ATP synthase subunit a, chloroplastic.